The following is a 201-amino-acid chain: Ribonuclease HII (201 aa).

In terms of domain architecture, RNase H type-2 spans 11 to 201 (LRECGCDEAG…VVDADRPTTE (191 aa)). 3 residues coordinate a divalent metal cation: Asp17, Glu18, and Asp109.

This sequence belongs to the RNase HII family. The cofactor is Mn(2+). Mg(2+) serves as cofactor.

The protein resides in the cytoplasm. The catalysed reaction is Endonucleolytic cleavage to 5'-phosphomonoester.. Its function is as follows. Endonuclease that specifically degrades the RNA of RNA-DNA hybrids. The polypeptide is Ribonuclease HII (rnhB) (Porphyromonas gingivalis (strain ATCC BAA-308 / W83)).